Reading from the N-terminus, the 557-residue chain is Dihydroxy-acid dehydratase (557 aa).

Cys-50 contributes to the [2Fe-2S] cluster binding site. Asp-82 is a binding site for Mg(2+). Cys-123 contributes to the [2Fe-2S] cluster binding site. Asp-124 and Lys-125 together coordinate Mg(2+). Lys-125 carries the N6-carboxylysine modification. Cys-195 contacts [2Fe-2S] cluster. Glu-447 serves as a coordination point for Mg(2+). Ser-473 (proton acceptor) is an active-site residue.

It belongs to the IlvD/Edd family. As to quaternary structure, homodimer. Requires [2Fe-2S] cluster as cofactor. Mg(2+) serves as cofactor.

The catalysed reaction is (2R)-2,3-dihydroxy-3-methylbutanoate = 3-methyl-2-oxobutanoate + H2O. It carries out the reaction (2R,3R)-2,3-dihydroxy-3-methylpentanoate = (S)-3-methyl-2-oxopentanoate + H2O. It participates in amino-acid biosynthesis; L-isoleucine biosynthesis; L-isoleucine from 2-oxobutanoate: step 3/4. Its pathway is amino-acid biosynthesis; L-valine biosynthesis; L-valine from pyruvate: step 3/4. Functions in the biosynthesis of branched-chain amino acids. Catalyzes the dehydration of (2R,3R)-2,3-dihydroxy-3-methylpentanoate (2,3-dihydroxy-3-methylvalerate) into 2-oxo-3-methylpentanoate (2-oxo-3-methylvalerate) and of (2R)-2,3-dihydroxy-3-methylbutanoate (2,3-dihydroxyisovalerate) into 2-oxo-3-methylbutanoate (2-oxoisovalerate), the penultimate precursor to L-isoleucine and L-valine, respectively. The protein is Dihydroxy-acid dehydratase of Herminiimonas arsenicoxydans.